A 343-amino-acid chain; its full sequence is Isopentenyl-diphosphate delta-isomerase (343 aa).

R9 to K10 is a substrate binding site. Residues S66, S67–T69, S98, and N126 each bind FMN. S98–R100 is a binding site for substrate. Q161 is a binding site for substrate. Residue E162 coordinates Mg(2+). FMN-binding positions include K193, T223, G273–R275, and A294–A295.

The protein belongs to the IPP isomerase type 2 family. Homooctamer. Dimer of tetramers. Requires FMN as cofactor. NADPH serves as cofactor. The cofactor is Mg(2+).

It localises to the cytoplasm. The enzyme catalyses isopentenyl diphosphate = dimethylallyl diphosphate. Functionally, involved in the biosynthesis of isoprenoids. Catalyzes the 1,3-allylic rearrangement of the homoallylic substrate isopentenyl (IPP) to its allylic isomer, dimethylallyl diphosphate (DMAPP). This Hydrogenovibrio crunogenus (strain DSM 25203 / XCL-2) (Thiomicrospira crunogena) protein is Isopentenyl-diphosphate delta-isomerase.